The following is an 864-amino-acid chain: Leucine--tRNA ligase (864 aa).

Positions 42 to 52 (PYPSGKLHMGH) match the 'HIGH' region motif. Residues 624–628 (KMSKS) carry the 'KMSKS' region motif. Lys-627 contributes to the ATP binding site.

This sequence belongs to the class-I aminoacyl-tRNA synthetase family.

It is found in the cytoplasm. It catalyses the reaction tRNA(Leu) + L-leucine + ATP = L-leucyl-tRNA(Leu) + AMP + diphosphate. The protein is Leucine--tRNA ligase of Burkholderia cenocepacia (strain ATCC BAA-245 / DSM 16553 / LMG 16656 / NCTC 13227 / J2315 / CF5610) (Burkholderia cepacia (strain J2315)).